The primary structure comprises 37 residues: Large ribosomal subunit protein bL36 (37 aa).

The protein belongs to the bacterial ribosomal protein bL36 family.

The polypeptide is Large ribosomal subunit protein bL36 (Photobacterium profundum (strain SS9)).